We begin with the raw amino-acid sequence, 655 residues long: Gastrulation defective protein 1 homolog (655 aa).

Disordered regions lie at residues 1-54 (MQRG…EQMI) and 83-165 (AKVF…DEQS). 3 stretches are compositionally biased toward basic and acidic residues: residues 23-36 (RSNE…KEST), 91-115 (QIEK…KEDD), and 134-146 (TDKE…SSKD). The span at 147–164 (EDSDDDDYSSDEDSDDEQ) shows a compositional bias: acidic residues. WD repeat units lie at residues 180-219 (HGSR…SSMR), 227-268 (CENH…ECCK), 281-321 (GHVA…EQLQ), 330-369 (GLRT…VNTT), 377-416 (QKGS…QPLH), 422-467 (FSRY…EVQR), and 470-510 (VSNA…RGAK). Disordered regions lie at residues 544-580 (KSRT…VASS) and 633-655 (AIFS…EADK). 2 stretches are compositionally biased toward basic and acidic residues: residues 554 to 564 (KARMDPVKSQR) and 639 to 655 (LPAD…EADK).

Belongs to the WD repeat GAD-1 family.

This chain is Gastrulation defective protein 1 homolog, found in Drosophila melanogaster (Fruit fly).